Consider the following 240-residue polypeptide: Ubiquinone biosynthesis O-methyltransferase (240 aa).

4 residues coordinate S-adenosyl-L-methionine: arginine 44, glycine 64, aspartate 85, and methionine 129.

Belongs to the methyltransferase superfamily. UbiG/COQ3 family.

The enzyme catalyses a 3-demethylubiquinol + S-adenosyl-L-methionine = a ubiquinol + S-adenosyl-L-homocysteine + H(+). It catalyses the reaction a 3-(all-trans-polyprenyl)benzene-1,2-diol + S-adenosyl-L-methionine = a 2-methoxy-6-(all-trans-polyprenyl)phenol + S-adenosyl-L-homocysteine + H(+). It participates in cofactor biosynthesis; ubiquinone biosynthesis. Its function is as follows. O-methyltransferase that catalyzes the 2 O-methylation steps in the ubiquinone biosynthetic pathway. The polypeptide is Ubiquinone biosynthesis O-methyltransferase (Escherichia coli O8 (strain IAI1)).